The following is a 401-amino-acid chain: UDP-N-acetylglucosamine--N-acetylmuramyl-(pentapeptide) pyrophosphoryl-undecaprenol N-acetylglucosamine transferase (401 aa).

The disordered stretch occupies residues 1–24 (MTRISVPAGQERNDGGISVPAGQE). UDP-N-acetyl-alpha-D-glucosamine-binding positions include 39-41 (TAG), Asn-157, Arg-194, Ser-228, and Gln-324.

It belongs to the glycosyltransferase 28 family. MurG subfamily.

The protein localises to the cell membrane. The catalysed reaction is di-trans,octa-cis-undecaprenyl diphospho-N-acetyl-alpha-D-muramoyl-L-alanyl-D-glutamyl-meso-2,6-diaminopimeloyl-D-alanyl-D-alanine + UDP-N-acetyl-alpha-D-glucosamine = di-trans,octa-cis-undecaprenyl diphospho-[N-acetyl-alpha-D-glucosaminyl-(1-&gt;4)]-N-acetyl-alpha-D-muramoyl-L-alanyl-D-glutamyl-meso-2,6-diaminopimeloyl-D-alanyl-D-alanine + UDP + H(+). It functions in the pathway cell wall biogenesis; peptidoglycan biosynthesis. In terms of biological role, cell wall formation. Catalyzes the transfer of a GlcNAc subunit on undecaprenyl-pyrophosphoryl-MurNAc-pentapeptide (lipid intermediate I) to form undecaprenyl-pyrophosphoryl-MurNAc-(pentapeptide)GlcNAc (lipid intermediate II). This chain is UDP-N-acetylglucosamine--N-acetylmuramyl-(pentapeptide) pyrophosphoryl-undecaprenol N-acetylglucosamine transferase, found in Mycolicibacterium vanbaalenii (strain DSM 7251 / JCM 13017 / BCRC 16820 / KCTC 9966 / NRRL B-24157 / PYR-1) (Mycobacterium vanbaalenii).